A 397-amino-acid polypeptide reads, in one-letter code: Pectate lyase 4 (397 aa).

Positions 1–25 (MGIKHCCYILYFTLALVTLVQAGRL) are cleaved as a signal peptide. An N-linked (GlcNAc...) asparagine glycan is attached at Asn36. Cysteines 54 and 71 form a disulfide. PbH1 repeat units lie at residues 159-202 (VKNV…HVTG), 203-224 (SSDIWIDHCTLSKSFDGLVDVN), and 227-248 (STGVTISNCKFTHHEKAVLLGA). Ca(2+)-binding residues include Asp194, Asp218, and Asp222. Arg274 is an active-site residue.

This sequence belongs to the polysaccharide lyase 1 family. Amb a subfamily. In terms of assembly, monomer. It depends on Ca(2+) as a cofactor. In terms of processing, the N-terminus is blocked. As to expression, pollen and flowers.

It carries out the reaction Eliminative cleavage of (1-&gt;4)-alpha-D-galacturonan to give oligosaccharides with 4-deoxy-alpha-D-galact-4-enuronosyl groups at their non-reducing ends.. Its pathway is glycan metabolism; pectin degradation; 2-dehydro-3-deoxy-D-gluconate from pectin: step 2/5. In terms of biological role, has pectate lyase activity. This is Pectate lyase 4 from Ambrosia artemisiifolia (Common ragweed).